A 252-amino-acid chain; its full sequence is Maintenance of carboxysome distribution protein A (252 aa).

ATP-binding residues include G11, G12, G14, K15, T16, T17, Q41, E147, K151, F182, R183, L216, E217, and S218. T16 contacts Mg(2+).

It belongs to the ParA family. McdA subfamily. In terms of assembly, self-associates (probably a homodimer), interacts with McdB probably via the C-terminus of both proteins. Shows no signs of filament formation. Homodimerizes in the presence of ATP, making extra nucleotide contacts than with ADP or AMP-PNP. Each subunit binds 1 ATP molecule; Glu-147, Lys-151 and Arg-183 cross the dimer interface to contact ATP in the other subunit, while Phe-182, Arg-183 and Phe-221 stack with the adenine base in their own subunit.

The protein localises to the cytoplasm. It is found in the nucleoid. It carries out the reaction ATP + H2O = ADP + phosphate + H(+). Its function is as follows. McdA and McdB together mediate carboxysome (Cb) spacing, size, ultrastructure and probably inheritance in the cell. Together they prevent Cb aggregation. McdA is an ATPase that forms dynamic gradients on the nucleoid in response to adapter protein McdB, which associates with carboxysomes. The interplay between McdA gradients on the nucleoid and McdB-bound carboxysomes result in the equal spacing of Cbs along the cell length. Binds nucleoid DNA in an ATP-dependent manner; neither ADP nor ATP-gamma-S support DNA binding. Upon ATP-binding dimerizes and binds nucleoid DNA; the (McdA-ATP)2 dimer transiently binds McdB-bound Cbs. McdA's ATPase activity is stimulated 2-fold by DNA and McdB; ATP hydrolysis causes McdA release from DNA. Overexpression leads to loss of McdA oscillation, diffuse nucleoid staining by McdA with formation of large carboxysome aggregates that are in regions depleted of McdA; McdA remains nucleoid-associated. Functionally, mutagenesis studies (characterized in vivo) suggest ATP binding, protein dimerization and a conformational change are necessary for nucleoid DNA-binding and binding to McdB-bound Cbs, which tethers Cbs to the nucleoid. Eventual McdB-stimulated ATP hydrolysis causes de-dimerization of McdA which no longer binds the nucleoid and releases McdB and Cbs. McdB-bound Cbs then move to a region of higher McdA concentration, distributing Cbs across the nucleoid. In terms of biological role, incorrect positioning (aggregation) of carboxysomes results in reduced CO(2) fixation by encapsulated ribulose-1,5-bisphosphate carboxylase (RuBisCO, cbbL/cbbS), which leads to slower growth, cell elongation, asymmetric cell division and an increase in RuBisCO levels. The polypeptide is Maintenance of carboxysome distribution protein A (Synechococcus elongatus (strain ATCC 33912 / PCC 7942 / FACHB-805) (Anacystis nidulans R2)).